A 347-amino-acid polypeptide reads, in one-letter code: Ribosomal RNA large subunit methyltransferase M (347 aa).

Residues Ser184, 217–220, Asp236, Asp256, and Asp272 contribute to the S-adenosyl-L-methionine site; that span reads APGG. The Proton acceptor role is filled by Lys301.

Belongs to the class I-like SAM-binding methyltransferase superfamily. RNA methyltransferase RlmE family. RlmM subfamily. In terms of assembly, monomer.

It localises to the cytoplasm. It carries out the reaction cytidine(2498) in 23S rRNA + S-adenosyl-L-methionine = 2'-O-methylcytidine(2498) in 23S rRNA + S-adenosyl-L-homocysteine + H(+). Its function is as follows. Catalyzes the 2'-O-methylation at nucleotide C2498 in 23S rRNA. This chain is Ribosomal RNA large subunit methyltransferase M, found in Xanthomonas oryzae pv. oryzae (strain KACC10331 / KXO85).